We begin with the raw amino-acid sequence, 834 residues long: Putative COX1/OXI3 intron 1 protein (834 aa).

Positions 162-188 (MKDTNNTKGNTKSEGSTERGNSGVDRG) are disordered. Positions 167–181 (NTKGNTKSEGSTERG) are enriched in polar residues. A Reverse transcriptase domain is found at 296 to 577 (LSNELGTGKF…TPARFLGYNI (282 aa)).

The protein resides in the mitochondrion. In Saccharomyces cerevisiae (strain ATCC 204508 / S288c) (Baker's yeast), this protein is Putative COX1/OXI3 intron 1 protein (AI1).